A 526-amino-acid chain; its full sequence is Thymocyte selection-associated high mobility group box protein TOX (526 aa).

Disordered stretches follow at residues 138-178 and 192-264; these read MPDI…PHGQ and GLNM…PQKP. The segment covering 192-203 has biased composition (polar residues); that stretch reads GLNMGGSNVPHN. The span at 209–220 shows a compositional bias: low complexity; it reads GSKSATPSPSSS. Positions 228 to 245 are enriched in basic and acidic residues; sequence DTSKINGGEKRPASDMGK. The Nuclear localization signal motif lies at 237–256; sequence KRPASDMGKKPKTPKKKKKK. Basic residues predominate over residues 246–256; that stretch reads KPKTPKKKKKK. Positions 261 to 329 form a DNA-binding region, HMG box; it reads PQKPVSAYAL…EYLKQLAAYR (69 aa).

The protein belongs to the high motility group (HMG) box superfamily. Interacts with HBO1 complex composed at least of KAT7/HBO1, ING4, MEAF6, and JADE2; this complex is involved in histone acetylation. Interacts with DNMT1, LEO1, PAF1, SAP130 and SIN3A; these interactors regulate chromatin remodeling. Interacts with an array of proteins involved in RNA processing and translation and DNA replication. As to expression, expressed in NK cells. Highly expressed in tumor-infiltrating CD8-positive T cells (at protein level).

The protein resides in the nucleus. Transcriptional regulator with a major role in neural stem cell commitment and corticogenesis as well as in lymphoid cell development and lymphoid tissue organogenesis. Binds to GC-rich DNA sequences in the proximity of transcription start sites and may alter chromatin structure, modifying access of transcription factors to DNA. During cortical development, controls the neural stem cell pool by inhibiting the switch from proliferative to differentiating progenitors. Beyond progenitor cells, promotes neurite outgrowth in newborn neurons migrating to reach the cortical plate. May activate or repress critical genes for neural stem cell fate such as SOX2, EOMES and ROBO2. Plays an essential role in the development of lymphoid tissue-inducer (LTi) cells, a subset necessary for the formation of secondary lymphoid organs: peripheral lymph nodes and Peyer's patches. Acts as a developmental checkpoint and regulates thymocyte positive selection toward T cell lineage commitment. Required for the development of various T cell subsets, including CD4-positive helper T cells, CD8-positive cytotoxic T cells, regulatory T cells and CD1D-dependent natural killer T (NKT) cells. Required for the differentiation of common lymphoid progenitors (CMP) to innate lymphoid cells (ILC). May regulate the NOTCH-mediated gene program, promoting differentiation of the ILC lineage. Required at the progenitor phase of NK cell development in the bone marrow to specify NK cell lineage commitment. Upon chronic antigen stimulation, diverts T cell development by promoting the generation of exhaustive T cells, while suppressing effector and memory T cell programming. May regulate the expression of genes encoding inhibitory receptors such as PDCD1 and induce the exhaustion program, to prevent the overstimulation of T cells and activation-induced cell death. This Homo sapiens (Human) protein is Thymocyte selection-associated high mobility group box protein TOX.